The primary structure comprises 210 residues: Guanylate kinase (210 aa).

The region spanning 5-183 (GILFVISAPS…AVEEFKSIIL (179 aa)) is the Guanylate kinase-like domain. An ATP-binding site is contributed by 12–19 (APSGAGKT).

This sequence belongs to the guanylate kinase family.

It localises to the cytoplasm. The enzyme catalyses GMP + ATP = GDP + ADP. Functionally, essential for recycling GMP and indirectly, cGMP. The polypeptide is Guanylate kinase (Syntrophotalea carbinolica (strain DSM 2380 / NBRC 103641 / GraBd1) (Pelobacter carbinolicus)).